Reading from the N-terminus, the 125-residue chain is Cystatin-like cysteine protease inhibitor EPIC2B (125 aa).

An N-terminal signal peptide occupies residues 1 to 21; it reads MSFLRPTLALLAVTALVTTSA. Residue asparagine 45 is glycosylated (N-linked (GlcNAc...) asparagine). The Secondary area of contact signature appears at 68 to 72; it reads QVVSG.

Belongs to the cystatin family. In terms of assembly, interacts with the host papain-like cysteine protease PIP1. Interacts with the host papain-like cysteine protease RCR3. Interacts with the host papain-like cysteine protease C14.

The protein resides in the secreted. In terms of biological role, secreted effector that interacts with and inhibits the pathogenesis-related papain-like cysteine proteases C14, PIP1 and RCR3 of host plants. Inhibition of host proteases by a pathogen extracellular protease inhibitor forms a specific type of defense-counterdefense mechanism between plants and microbial pathogens. This chain is Cystatin-like cysteine protease inhibitor EPIC2B, found in Phytophthora infestans (strain T30-4) (Potato late blight agent).